The primary structure comprises 552 residues: uncharacterized protein (552 aa).

The tract at residues Met-1–Tyr-59 is disordered. Over residues Pro-39–Leu-50 the composition is skewed to polar residues. 12 helical membrane-spanning segments follow: residues Ile-116–Gly-136, Leu-158–Gly-178, Ile-181–Pro-201, Ile-203–Leu-223, Gly-238–Val-258, Trp-271–Pro-291, Ile-345–Phe-365, Gly-383–Leu-403, Leu-424–Thr-444, Ile-450–Phe-470, Cys-484–Ile-506, and Phe-519–Phe-539.

Belongs to the major facilitator superfamily.

It localises to the membrane. This is an uncharacterized protein from Schizosaccharomyces pombe (strain 972 / ATCC 24843) (Fission yeast).